Reading from the N-terminus, the 473-residue chain is Probable ribonuclease FAU-1 (473 aa).

The protein belongs to the FAU-1 family.

Its function is as follows. Probable RNase involved in rRNA stability through maturation and/or degradation of precursor rRNAs. Binds to RNA in loop regions with AU-rich sequences. The chain is Probable ribonuclease FAU-1 from Hyperthermus butylicus (strain DSM 5456 / JCM 9403 / PLM1-5).